Here is a 430-residue protein sequence, read N- to C-terminus: Putrescine 2-hydroxylase (430 aa).

Residues L88–E203 form the Rieske domain. [2Fe-2S] cluster contacts are provided by C128, H130, C162, and H165.

This sequence belongs to the bacterial ring-hydroxylating dioxygenase alpha subunit family. [2Fe-2S] cluster serves as cofactor.

Rieske-type iron sulfur protein that can catalyze in vitro the 2-hydroxylation of putrescine, forming 2-hydroxyputrescine. May be involved in the biosynthesis of the cyclic hydroxamate siderophore alcaligin. This Bordetella bronchiseptica (strain ATCC BAA-588 / NCTC 13252 / RB50) (Alcaligenes bronchisepticus) protein is Putrescine 2-hydroxylase.